Here is a 1404-residue protein sequence, read N- to C-terminus: DNA-directed RNA polymerase subunit beta' (1404 aa).

Cysteine 70, cysteine 72, cysteine 85, and cysteine 88 together coordinate Zn(2+). Mg(2+) contacts are provided by aspartate 460, aspartate 462, and aspartate 464. 4 residues coordinate Zn(2+): cysteine 825, cysteine 899, cysteine 906, and cysteine 909.

Belongs to the RNA polymerase beta' chain family. In terms of assembly, the RNAP catalytic core consists of 2 alpha, 1 beta, 1 beta' and 1 omega subunit. When a sigma factor is associated with the core the holoenzyme is formed, which can initiate transcription. Mg(2+) is required as a cofactor. Requires Zn(2+) as cofactor.

It catalyses the reaction RNA(n) + a ribonucleoside 5'-triphosphate = RNA(n+1) + diphosphate. Its function is as follows. DNA-dependent RNA polymerase catalyzes the transcription of DNA into RNA using the four ribonucleoside triphosphates as substrates. The chain is DNA-directed RNA polymerase subunit beta' from Nitrosomonas eutropha (strain DSM 101675 / C91 / Nm57).